A 72-amino-acid chain; its full sequence is Translation initiation factor IF-1 (72 aa).

In terms of domain architecture, S1-like spans 1–72 (MAKEDVIEIE…TRGRITYRFK (72 aa)).

It belongs to the IF-1 family. In terms of assembly, component of the 30S ribosomal translation pre-initiation complex which assembles on the 30S ribosome in the order IF-2 and IF-3, IF-1 and N-formylmethionyl-tRNA(fMet); mRNA recruitment can occur at any time during PIC assembly.

It is found in the cytoplasm. Its function is as follows. One of the essential components for the initiation of protein synthesis. Stabilizes the binding of IF-2 and IF-3 on the 30S subunit to which N-formylmethionyl-tRNA(fMet) subsequently binds. Helps modulate mRNA selection, yielding the 30S pre-initiation complex (PIC). Upon addition of the 50S ribosomal subunit IF-1, IF-2 and IF-3 are released leaving the mature 70S translation initiation complex. The protein is Translation initiation factor IF-1 of Streptococcus agalactiae serotype Ia (strain ATCC 27591 / A909 / CDC SS700).